Consider the following 380-residue polypeptide: Two-component response regulator ORR28 (380 aa).

The 118-residue stretch at 13 to 130 folds into the Response regulatory domain; the sequence is SAMVIDEDKC…TIQNLWQHLD (118 aa). Asp65 is modified (4-aspartylphosphate). The segment at residues 169-223 is a DNA-binding region (myb-like GARP); sequence RKYYLMWTPHLQKKFLHALEILGEGQISLMIMDVDNIDRKQISTHLQKHRLQLKK. Residues 225 to 245 form a disordered region; sequence LSKASFTKGSNEDTSNPSAKN. Residues 228 to 245 are compositionally biased toward polar residues; sequence ASFTKGSNEDTSNPSAKN.

The protein belongs to the ARR family. Type-B subfamily. Two-component system major event consists of a His-to-Asp phosphorelay between a sensor histidine kinase (HK) and a response regulator (RR). In plants, the His-to-Asp phosphorelay involves an additional intermediate named Histidine-containing phosphotransfer protein (HPt). This multistep phosphorelay consists of a His-Asp-His-Asp sequential transfer of a phosphate group between first a His and an Asp of the HK protein, followed by the transfer to a conserved His of the HPt protein and finally the transfer to an Asp in the receiver domain of the RR protein.

Its subcellular location is the nucleus. Transcriptional activator that binds specific DNA sequence. Functions as a response regulator involved in His-to-Asp phosphorelay signal transduction system. Phosphorylation of the Asp residue in the receiver domain activates the ability of the protein to promote the transcription of target genes. May directly activate some type-A response regulators in response to cytokinins. The polypeptide is Two-component response regulator ORR28 (Oryza sativa subsp. indica (Rice)).